The chain runs to 185 residues: Casparian strip membrane protein 5 (185 aa).

Residues 1–25 (MKAEAVESGEASTIIAAPKRGINRG) are Cytoplasmic-facing. A helical transmembrane segment spans residues 26-46 (ISIADLILRGVAAIGTFASAL). The Extracellular segment spans residues 47-75 (TMGTTSETLTIFTQPIMIRAKYNDLPSLT). Residues 76–96 (FFVIANSIVCGYLVLSIPLSI) traverse the membrane as a helical segment. The Cytoplasmic segment spans residues 97-108 (SHFIRREARITR). Residues 109-129 (IILVIFDTAMVELLTAGASAA) form a helical membrane-spanning segment. The Extracellular portion of the chain corresponds to 130-160 (TVVVYLAHKRNANWLAICQQFNNFCERISGS). The chain crosses the membrane as a helical span at residues 161-181 (LIGSFASIIMIMLIIITSAVA). The Cytoplasmic portion of the chain corresponds to 182-185 (LSRH).

Belongs to the Casparian strip membrane proteins (CASP) family. Homodimer and heterodimers.

The protein localises to the cell membrane. Regulates membrane-cell wall junctions and localized cell wall deposition. Required for establishment of the Casparian strip membrane domain (CSD) and the subsequent formation of Casparian strips, a cell wall modification of the root endodermis that determines an apoplastic barrier between the intraorganismal apoplasm and the extraorganismal apoplasm and prevents lateral diffusion. In Populus trichocarpa (Western balsam poplar), this protein is Casparian strip membrane protein 5.